A 785-amino-acid chain; its full sequence is Probably inactive leucine-rich repeat receptor-like protein kinase At5g58150 (785 aa).

Residues 1–21 form the signal peptide; that stretch reads MRLSLWGSLLFFSFFVKHLTS. At 22–436 the chain is on the extracellular side; sequence LDPNTDAYHL…KVNKKNTGLK (415 aa). LRR repeat units follow at residues 64 to 88, 89 to 112, 114 to 136, 138 to 160, 161 to 184, 186 to 208, 210 to 232, 236 to 258, 259 to 283, 284 to 306, 307 to 330, 331 to 355, 357 to 377, and 379 to 405; these read SENVLHISASGLDLSGSIPDNTIGK, MSKLQTLDLSGNKITSLPSDLWSL, LLESLNLSSNRISEPLPSNIGNF, SLHTLDLSFNSISGKIPAAISNL, VNLTTLKLHNNDFQFGVPPELVHC, SLLSIDLSSNRLNESLPVGFGSA, PLLKSLNLSRNLFQGSLIGVLHE, TVDLSENRFDGHILQLIPGHKHN, WSSLIHLDLSDNSFVGHIFNGLSSA, HKLGHLNLACNRFRAQEFPEIGK, LSALHYLNLSRTNLTNIIPREISR, LSHLKVLDLSSNNLTGHVPMLSVKN, EVLDLSLNKLDGDIPRPLLEK, and AMMQRFNFSFNNLTFCNPNFSQETIQR. The N-linked (GlcNAc...) asparagine glycan is linked to Asn119. Residues Asn162, Asn198, Asn216, and Asn258 are each glycosylated (N-linked (GlcNAc...) asparagine). N-linked (GlcNAc...) asparagine glycans are attached at residues Asn314, Asn319, and Asn343. Residues Asn385, Asn390, and Asn397 are each glycosylated (N-linked (GlcNAc...) asparagine). Residues 437-457 traverse the membrane as a helical segment; it reads IGLGLAISMAFLLIGLLLILV. Residues 458–785 are Cytoplasmic-facing; that stretch reads ALRVRRKSRT…GLLKDISPNY (328 aa). 2 positions are modified to phosphothreonine: Thr510 and Thr518. The 265-residue stretch at 521–785 folds into the Protein kinase domain; the sequence is FDRGTMLWEG…GLLKDISPNY (265 aa). ATP is bound by residues 527–535 and Lys549; that span reads LWEGKSGPT. Phosphotyrosine occurs at positions 594 and 683.

It belongs to the protein kinase superfamily. Ser/Thr protein kinase family.

The protein resides in the cell membrane. In Arabidopsis thaliana (Mouse-ear cress), this protein is Probably inactive leucine-rich repeat receptor-like protein kinase At5g58150.